A 493-amino-acid polypeptide reads, in one-letter code: MKQIQFKLNATTDLQSFDTLILPVFDQGQSTQLAKEAHLQELTQTLFNQGDFLAKPGQTQMLFQPAKIDCARLLLVGMGDPKTLTVKGYLESLNAAAKALDNSGAVNVLNTLIECIPAKNDQAWAIYQNTLAFQRSLYDYEHESRNKKTPKEPKLNSMTYAAEATAENEKAVNQAQASALGMALTQDLANMPSNYCTPTYLAETAEAMAKTYGFDVNILEQDEMIKMGMGSFMAVAQGAHTPPKMICLSYQGADASEAPIALVGKGVTFDTGGISLKPGEAMDEMKYDMGGAATVLGVFEALGRLKPKLNVVAVIPSTENMPAGNAIKPGDVVKSLSGQTIEILNTDAEGRLILCDALTYTQQTYKPSKIVDMATLTGACIIALGHQMSAVLGNDQSLVDALVASGQKTYDRFWQMPLSEEYDEQLKSNFADMANIGGRAAGTITAAQFLARFTKEVNWAHLDIAGTAWISGKDKGATGRPVPALVDFLLEQI.

Mn(2+) is bound by residues Lys265 and Asp270. Lys277 is an active-site residue. Residues Asp288, Asp347, and Glu349 each contribute to the Mn(2+) site. Residue Arg351 is part of the active site.

The protein belongs to the peptidase M17 family. Mn(2+) is required as a cofactor.

The protein localises to the cytoplasm. The enzyme catalyses Release of an N-terminal amino acid, Xaa-|-Yaa-, in which Xaa is preferably Leu, but may be other amino acids including Pro although not Arg or Lys, and Yaa may be Pro. Amino acid amides and methyl esters are also readily hydrolyzed, but rates on arylamides are exceedingly low.. It carries out the reaction Release of an N-terminal amino acid, preferentially leucine, but not glutamic or aspartic acids.. Presumably involved in the processing and regular turnover of intracellular proteins. Catalyzes the removal of unsubstituted N-terminal amino acids from various peptides. This is Probable cytosol aminopeptidase from Hydrogenovibrio crunogenus (strain DSM 25203 / XCL-2) (Thiomicrospira crunogena).